A 520-amino-acid chain; its full sequence is Keratin, type II cytoskeletal 8 (520 aa).

A compositionally biased stretch (low complexity) spans 1-19 (MSTYSKKTSYTVKSSSSGS). The segment at 1–20 (MSTYSKKTSYTVKSSSSGSI) is disordered. The head stretch occupies residues 2–114 (STYSKKTSYT…DPNIQIVRTQ (113 aa)). A Phosphoserine modification is found at serine 28. Residues 115–150 (EKEQIKTLNNRFASFIDKVRFLEQQNKMLETKWSLL) are coil 1A. Positions 115–426 (EKEQIKTLNN…KLLEGEEDRL (312 aa)) constitute an IF rod domain. Residues 151–166 (QNQTATRSNIDAMFEA) are linker 1. The segment at 168–259 (IANLRRQLDS…QIFEEEIREL (92 aa)) is coil 1B. The tract at residues 260 to 283 (QSQIKDTSVVVEMDNSRNLDMDAI) is linker 12. The coil 2 stretch occupies residues 284–422 (VAEVRAQYED…ATYRKLLEGE (139 aa)). The tract at residues 423–520 (EDRLATGIKA…VSESSEVVQD (98 aa)) is tail.

This sequence belongs to the intermediate filament family. In terms of assembly, heterotetramer of two type I and two type II keratins. Keratin-8 associates with keratin-18. As to expression, expressed in simple epithelia.

Its subcellular location is the cytoplasm. The protein localises to the nucleus. It localises to the nucleoplasm. The protein resides in the nucleus matrix. Its function is as follows. Together with KRT19, helps to link the contractile apparatus to dystrophin at the costameres of striated muscle. The polypeptide is Keratin, type II cytoskeletal 8 (Danio rerio (Zebrafish)).